Consider the following 714-residue polypeptide: K(+)-insensitive pyrophosphate-energized proton pump (714 aa).

Residues 1 to 20 form the signal peptide; it reads MRMTVIPIVILCGVLSVVYA. A run of 4 helical transmembrane segments spans residues 52–74, 85–105, 128–148, and 166–186; these read LTRQ…WYLL, GAVL…RANL, ITGM…YFVL, and VSLG…GGIF. Lysine 188 contacts substrate. 4 residues coordinate Mg(2+): aspartate 191, aspartate 195, asparagine 218, and aspartate 221. 6 consecutive transmembrane segments (helical) span residues 238–258, 263–283, 298–318, 333–353, 383–403, and 411–431; these read AVSV…TPIL, VYPL…TFFV, GLIA…YATV, GTNL…IVVI, GLAV…GGII, and LFGT…IVAL. Residue aspartate 439 coordinates Mg(2+). Transmembrane regions (helical) follow at residues 470 to 490, 522 to 542, 591 to 611, and 618 to 638; these read AVTK…LFAA, YVVA…GIAM, VIPS…VLLI, and AFAA…FVAI. Ca(2+)-binding residues include aspartate 648, aspartate 680, and aspartate 684. Lysine 687 serves as a coordination point for substrate. Residues 693–713 traverse the membrane as a helical segment; it reads AVNPAIKITNIVALLLLAVLA.

The protein belongs to the H(+)-translocating pyrophosphatase (TC 3.A.10) family. K(+)-insensitive subfamily. Homodimer. It depends on Mg(2+) as a cofactor.

Its subcellular location is the acidocalcisome membrane. It carries out the reaction diphosphate + H2O + H(+)(in) = 2 phosphate + 2 H(+)(out). Functionally, proton pump that utilizes the energy of pyrophosphate hydrolysis as the driving force for proton movement across the membrane. Generates a proton motive force. The polypeptide is K(+)-insensitive pyrophosphate-energized proton pump (Agrobacterium fabrum (strain C58 / ATCC 33970) (Agrobacterium tumefaciens (strain C58))).